The sequence spans 187 residues: NADH-quinone oxidoreductase subunit B (187 aa).

C66, C67, C131, and C161 together coordinate [4Fe-4S] cluster.

Belongs to the complex I 20 kDa subunit family. As to quaternary structure, NDH-1 is composed of 14 different subunits. Subunits NuoB, C, D, E, F, and G constitute the peripheral sector of the complex. Requires [4Fe-4S] cluster as cofactor.

It is found in the cell inner membrane. It catalyses the reaction a quinone + NADH + 5 H(+)(in) = a quinol + NAD(+) + 4 H(+)(out). In terms of biological role, NDH-1 shuttles electrons from NADH, via FMN and iron-sulfur (Fe-S) centers, to quinones in the respiratory chain. Couples the redox reaction to proton translocation (for every two electrons transferred, four hydrogen ions are translocated across the cytoplasmic membrane), and thus conserves the redox energy in a proton gradient. The sequence is that of NADH-quinone oxidoreductase subunit B from Rhizorhabdus wittichii (strain DSM 6014 / CCUG 31198 / JCM 15750 / NBRC 105917 / EY 4224 / RW1) (Sphingomonas wittichii).